Consider the following 480-residue polypeptide: MPSVKIGIIGAGSAVFSLRLVSDLCKTPGLSGSTVTLMDIDEERLDAILTIAKKYVEEVGADLKFEKTMNLDDVIIDADFVINTAMVGGHTYLEKVRQIGEKYGYYRGIDAQEFNMVSDYYTFSNYNQLKYFVDIARKIEKLSPKAWYLQAANPIFEGTTLVTRTVPIKAVGFCHGHYGVMEIVEKLGLEEEKVDWQVAGVNHGIWLNRFRYNGGNAYPLLDKWIEEKSKDWKPENPFNDQLSPAAIDMYRFYGVMPIGDTVRNSSWRYHRDLETKKKWYGEPWGGADSEIGWKWYQDTLGKVTEITKKVAKFIKENPSVRLSDLGSVLGKDLSEKQFVLEVEKILDPERKSGEQHIPFIDALLNDNKARFVVNIPNKGIIHGIDDDVVVEVPALVDKNGIHPEKIEPPLPDRVVKYYLRPRIMRMEMALEAFLTGDIRIIKELLYRDPRTKSDEQVEKVIEEILALPENEEMRKHYLKR.

4–70 is a binding site for NAD(+); it reads VKIGIIGAGS…ADLKFEKTMN (67 aa). Substrate contacts are provided by Asp-119 and Asn-153. Cys-174 serves as a coordination point for Mn(2+). Residue His-175 is the Proton donor of the active site. A Mn(2+)-binding site is contributed by His-203. Residue Asp-260 is the Proton acceptor of the active site.

Belongs to the glycosyl hydrolase 4 family. In terms of assembly, homodimer. The cofactor is NAD(+). Requires Mn(2+) as cofactor. It depends on Co(2+) as a cofactor. Ni(2+) is required as a cofactor.

The catalysed reaction is Hydrolysis of terminal, non-reducing (1-&gt;4)-linked alpha-D-glucose residues with release of alpha-D-glucose.. Inhibited by Hg(2+) ion and EDTA. Its function is as follows. Alpha-glycosidase with a very broad specificity. Hydrolyzes maltose and other small maltooligosaccharides but is inactive against the polymeric substrate starch. AglA is not specific with respect to the configuration at the C-4 position of its substrates because glycosidic derivatives of D-galactose are also hydrolyzed. Does not cleave beta-glycosidic bonds. This Thermotoga maritima (strain ATCC 43589 / DSM 3109 / JCM 10099 / NBRC 100826 / MSB8) protein is Alpha-glucosidase (aglA).